A 172-amino-acid chain; its full sequence is 6,7-dimethyl-8-ribityllumazine synthase (172 aa).

5-amino-6-(D-ribitylamino)uracil contacts are provided by residues Phe24, 58-60, and 82-84; these read ALE and AVI. 87 to 88 provides a ligand contact to (2S)-2-hydroxy-3-oxobutyl phosphate; that stretch reads ET. The active-site Proton donor is His90. Asn115 is a 5-amino-6-(D-ribitylamino)uracil binding site. Position 129 (Arg129) interacts with (2S)-2-hydroxy-3-oxobutyl phosphate. The tract at residues 150 to 172 is disordered; sequence ALDQLGDDDEDEEEDEDDEEERA. The segment covering 154–172 has biased composition (acidic residues); the sequence is LGDDDEDEEEDEDDEEERA.

Belongs to the DMRL synthase family.

The enzyme catalyses (2S)-2-hydroxy-3-oxobutyl phosphate + 5-amino-6-(D-ribitylamino)uracil = 6,7-dimethyl-8-(1-D-ribityl)lumazine + phosphate + 2 H2O + H(+). It participates in cofactor biosynthesis; riboflavin biosynthesis; riboflavin from 2-hydroxy-3-oxobutyl phosphate and 5-amino-6-(D-ribitylamino)uracil: step 1/2. In terms of biological role, catalyzes the formation of 6,7-dimethyl-8-ribityllumazine by condensation of 5-amino-6-(D-ribitylamino)uracil with 3,4-dihydroxy-2-butanone 4-phosphate. This is the penultimate step in the biosynthesis of riboflavin. The sequence is that of 6,7-dimethyl-8-ribityllumazine synthase from Burkholderia multivorans (strain ATCC 17616 / 249).